The primary structure comprises 192 residues: Peptide methionine sulfoxide reductase MsrA 1 (192 aa).

The active site involves Cys25.

It belongs to the MsrA Met sulfoxide reductase family.

The catalysed reaction is L-methionyl-[protein] + [thioredoxin]-disulfide + H2O = L-methionyl-(S)-S-oxide-[protein] + [thioredoxin]-dithiol. The enzyme catalyses [thioredoxin]-disulfide + L-methionine + H2O = L-methionine (S)-S-oxide + [thioredoxin]-dithiol. Its function is as follows. Has an important function as a repair enzyme for proteins that have been inactivated by oxidation. Catalyzes the reversible oxidation-reduction of methionine sulfoxide in proteins to methionine. The sequence is that of Peptide methionine sulfoxide reductase MsrA 1 from Rhodopirellula baltica (strain DSM 10527 / NCIMB 13988 / SH1).